Here is a 429-residue protein sequence, read N- to C-terminus: 26S proteasome regulatory subunit 6A homolog (429 aa).

The disordered stretch occupies residues 1–21 (MSSPPPAAAAAMAVDDADDDQ). 217 to 224 (GPPGTGKT) lines the ATP pocket.

The protein belongs to the AAA ATPase family.

The protein localises to the cytoplasm. It is found in the nucleus. The 26S proteasome is involved in the ATP-dependent degradation of ubiquitinated proteins. The regulatory (or ATPase) complex confers ATP dependency and substrate specificity to the 26S complex. The chain is 26S proteasome regulatory subunit 6A homolog (TBP1) from Oryza sativa subsp. japonica (Rice).